The following is a 236-amino-acid chain: Phosphoribosylaminoimidazole-succinocarboxamide synthase (236 aa).

It belongs to the SAICAR synthetase family.

It catalyses the reaction 5-amino-1-(5-phospho-D-ribosyl)imidazole-4-carboxylate + L-aspartate + ATP = (2S)-2-[5-amino-1-(5-phospho-beta-D-ribosyl)imidazole-4-carboxamido]succinate + ADP + phosphate + 2 H(+). It participates in purine metabolism; IMP biosynthesis via de novo pathway; 5-amino-1-(5-phospho-D-ribosyl)imidazole-4-carboxamide from 5-amino-1-(5-phospho-D-ribosyl)imidazole-4-carboxylate: step 1/2. This chain is Phosphoribosylaminoimidazole-succinocarboxamide synthase, found in Streptococcus equi subsp. zooepidemicus (strain MGCS10565).